The following is a 195-amino-acid chain: Cytochrome c oxidase assembly protein CtaG (195 aa).

Residues 1 to 7 lie on the Cytoplasmic side of the membrane; the sequence is MSGGKPR. Residues 8–30 form a helical; Signal-anchor for type II membrane protein membrane-spanning segment; the sequence is SNTRTVAMLAGVVVLMGALSWAA. The Periplasmic segment spans residues 31-195; the sequence is VPFYSWFCKV…LDAKTEPTVN (165 aa).

This sequence belongs to the COX11/CtaG family.

The protein resides in the cell inner membrane. Its function is as follows. Exerts its effect at some terminal stage of cytochrome c oxidase synthesis, probably by being involved in the insertion of the copper B into subunit I. The polypeptide is Cytochrome c oxidase assembly protein CtaG (Paracoccus denitrificans (strain Pd 1222)).